We begin with the raw amino-acid sequence, 226 residues long: Exopolysaccharide production protein ExoY (226 aa).

Residues 34–54 (VLIAILALIALSPLFLLVMGL) form a helical membrane-spanning segment.

The protein belongs to the bacterial sugar transferase family.

It is found in the cell membrane. Its pathway is glycan metabolism; exopolysaccharide biosynthesis. Functionally, needed for the addition of the first sugar (galactose) to the isoprenoid carrier. May function as a sugar transferase. The sequence is that of Exopolysaccharide production protein ExoY (exoY) from Sinorhizobium fredii (strain NBRC 101917 / NGR234).